Here is an 894-residue protein sequence, read N- to C-terminus: Alanine--tRNA ligase (894 aa).

Belongs to the class-II aminoacyl-tRNA synthetase family.

It is found in the cytoplasm. The enzyme catalyses tRNA(Ala) + L-alanine + ATP = L-alanyl-tRNA(Ala) + AMP + diphosphate. Catalyzes the attachment of alanine to tRNA(Ala) in a two-step reaction: alanine is first activated by ATP to form Ala-AMP and then transferred to the acceptor end of tRNA(Ala). Also edits incorrectly charged Ser-tRNA(Ala) and Gly-tRNA(Ala) via its editing domain. This Leuconostoc citreum (strain KM20) protein is Alanine--tRNA ligase (alaS).